Consider the following 225-residue polypeptide: 7-cyano-7-deazaguanine synthase (225 aa).

Residue 10 to 20 (LSGGIDSATAA) coordinates ATP. Zn(2+) contacts are provided by C191, C199, C202, and C205.

Belongs to the QueC family. Zn(2+) serves as cofactor.

It carries out the reaction 7-carboxy-7-deazaguanine + NH4(+) + ATP = 7-cyano-7-deazaguanine + ADP + phosphate + H2O + H(+). The protein operates within purine metabolism; 7-cyano-7-deazaguanine biosynthesis. Functionally, catalyzes the ATP-dependent conversion of 7-carboxy-7-deazaguanine (CDG) to 7-cyano-7-deazaguanine (preQ(0)). The polypeptide is 7-cyano-7-deazaguanine synthase (Prochlorococcus marinus (strain NATL2A)).